Reading from the N-terminus, the 403-residue chain is Casein kinase II subunit alpha-2 (403 aa).

An N-terminal signal peptide occupies residues 1-31 (MHLIFFFSYFLRRYLLLLCAILILRAPLAHS). A Protein kinase domain is found at 104–389 (YEVVRKVGRG…AKEAMAHPYF (286 aa)). Residues 110-118 (VGRGKYSEV) and Lys133 contribute to the ATP site. Asn182 carries N-linked (GlcNAc...) asparagine glycosylation. Catalysis depends on Asp221, which acts as the Proton acceptor.

The protein belongs to the protein kinase superfamily. Ser/Thr protein kinase family. CK2 subfamily. Heterotetramer of two catalytic alpha subunits and two regulatory beta subunits. As to expression, seems to be present in all plant organs. But seems to be more expressed than CKA1.

Its subcellular location is the nucleus. The protein resides in the nucleolus. It catalyses the reaction L-seryl-[protein] + ATP = O-phospho-L-seryl-[protein] + ADP + H(+). It carries out the reaction L-threonyl-[protein] + ATP = O-phospho-L-threonyl-[protein] + ADP + H(+). Its function is as follows. Casein kinases are operationally defined by their preferential utilization of acidic proteins such as caseins as substrates. The alpha chain contains the catalytic site. The tetrameric holoenzyme CK2, composed of two alpha and two beta subunits, phosphorylates the transcription factor PIF1 after an exposure to light, resulting in a proteasome-dependent degradation of PIF1 and promotion of photomorphogenesis. CK2 phosphorylates translation initiation factors. May participate in the regulation of the initiation of translation. Acts as circadian clock component that maintains the correct period length through phosphorylation of CCA1. May act as an ectokinase that phosphorylates several extracellular proteins. This Arabidopsis thaliana (Mouse-ear cress) protein is Casein kinase II subunit alpha-2.